Reading from the N-terminus, the 612-residue chain is Peroxisomal carnitine O-octanoyltransferase (612 aa).

Position 1 is an N-acetylmethionine (Met1). 2 positions are modified to N6-succinyllysine: Lys40 and Lys57. His327 functions as the Proton acceptor in the catalytic mechanism. Residues Lys406 and 410 to 417 (KEKQLHPD) contribute to the CoA site. Residue Lys406 is modified to N6-acetyllysine; alternate. Position 406 is an N6-succinyllysine; alternate (Lys406). Residues Tyr439, Thr441, and Thr452 each coordinate (R)-carnitine. A Microbody targeting signal motif is present at residues 610-612 (PHL).

The protein belongs to the carnitine/choline acetyltransferase family. As to quaternary structure, monomer.

The protein localises to the peroxisome. The catalysed reaction is octanoyl-CoA + (R)-carnitine = O-octanoyl-(R)-carnitine + CoA. The enzyme catalyses 4,8-dimethylnonanoyl-CoA + (R)-carnitine = O-4,8-dimethylnonanoyl-(R)-carnitine + CoA. It participates in lipid metabolism; fatty acid beta-oxidation. Functionally, beta-oxidation of fatty acids. The highest activity concerns the C6 to C10 chain length substrate. The chain is Peroxisomal carnitine O-octanoyltransferase (CROT) from Bos taurus (Bovine).